The sequence spans 365 residues: Succinyl-diaminopimelate desuccinylase (365 aa).

His64 serves as a coordination point for Zn(2+). The active site involves Asp66. Asp95 serves as a coordination point for Zn(2+). The active-site Proton acceptor is Glu125. 3 residues coordinate Zn(2+): Glu126, Glu154, and His339.

This sequence belongs to the peptidase M20A family. DapE subfamily. In terms of assembly, homodimer. Zn(2+) is required as a cofactor. The cofactor is Co(2+).

It carries out the reaction N-succinyl-(2S,6S)-2,6-diaminopimelate + H2O = (2S,6S)-2,6-diaminopimelate + succinate. It functions in the pathway amino-acid biosynthesis; L-lysine biosynthesis via DAP pathway; LL-2,6-diaminopimelate from (S)-tetrahydrodipicolinate (succinylase route): step 3/3. Catalyzes the hydrolysis of N-succinyl-L,L-diaminopimelic acid (SDAP), forming succinate and LL-2,6-diaminopimelate (DAP), an intermediate involved in the bacterial biosynthesis of lysine and meso-diaminopimelic acid, an essential component of bacterial cell walls. The sequence is that of Succinyl-diaminopimelate desuccinylase from Nautilia profundicola (strain ATCC BAA-1463 / DSM 18972 / AmH).